Here is a 906-residue protein sequence, read N- to C-terminus: Putative disease resistance protein At1g59780 (906 aa).

Positions 20–59 (KLLSQEYERFQGVEEQITELRDDLKMLMAFLSDADAKKQT) form a coiled coil. An NB-ARC domain is found at 138–452 (SHAQLERKRE…AEGITYPGNY (315 aa)). ATP is bound at residue 187-194 (GLGGLGKT). LRR repeat units lie at residues 572–597 (LPLLRVLDLDGAKFKGGKLPSSIGKL), 599–619 (HLKYLSLYQASVTYLPSSLRN), 620–644 (LKSLLYLNLRINSGQLINVPNVFKE), and 825–850 (MPLLHTLHIVDCKKLKEIPDGLRFIS).

This sequence belongs to the disease resistance NB-LRR family.

Its function is as follows. Potential disease resistance protein. The sequence is that of Putative disease resistance protein At1g59780 from Arabidopsis thaliana (Mouse-ear cress).